Reading from the N-terminus, the 102-residue chain is Small ribosomal subunit protein uS10 (102 aa).

It belongs to the universal ribosomal protein uS10 family. Part of the 30S ribosomal subunit.

Its function is as follows. Involved in the binding of tRNA to the ribosomes. In Methanoculleus marisnigri (strain ATCC 35101 / DSM 1498 / JR1), this protein is Small ribosomal subunit protein uS10.